We begin with the raw amino-acid sequence, 507 residues long: Maturase K (507 aa).

The protein belongs to the intron maturase 2 family. MatK subfamily.

The protein resides in the plastid. It localises to the chloroplast. In terms of biological role, usually encoded in the trnK tRNA gene intron. Probably assists in splicing its own and other chloroplast group II introns. This Lyonia ligustrina (Maleberry) protein is Maturase K.